A 355-amino-acid chain; its full sequence is S-adenosylmethionine:tRNA ribosyltransferase-isomerase (355 aa).

It belongs to the QueA family. In terms of assembly, monomer.

Its subcellular location is the cytoplasm. It catalyses the reaction 7-aminomethyl-7-carbaguanosine(34) in tRNA + S-adenosyl-L-methionine = epoxyqueuosine(34) in tRNA + adenine + L-methionine + 2 H(+). It participates in tRNA modification; tRNA-queuosine biosynthesis. Transfers and isomerizes the ribose moiety from AdoMet to the 7-aminomethyl group of 7-deazaguanine (preQ1-tRNA) to give epoxyqueuosine (oQ-tRNA). The sequence is that of S-adenosylmethionine:tRNA ribosyltransferase-isomerase from Aeromonas hydrophila subsp. hydrophila (strain ATCC 7966 / DSM 30187 / BCRC 13018 / CCUG 14551 / JCM 1027 / KCTC 2358 / NCIMB 9240 / NCTC 8049).